The following is a 61-amino-acid chain: Protein translocase subunit SecE (61 aa).

The helical transmembrane segment at 39-59 threads the bilayer; the sequence is LGIILIGLIGMLIRIMGILVL.

Belongs to the SecE/SEC61-gamma family. Component of the Sec protein translocase complex. Heterotrimer consisting of SecY (alpha), SecG (beta) and SecE (gamma) subunits. The heterotrimers can form oligomers, although 1 heterotrimer is thought to be able to translocate proteins. Interacts with the ribosome. May interact with SecDF, and other proteins may be involved.

It is found in the cell membrane. Its function is as follows. Essential subunit of the Sec protein translocation channel SecYEG. Clamps together the 2 halves of SecY. May contact the channel plug during translocation. The protein is Protein translocase subunit SecE of Pyrococcus abyssi (strain GE5 / Orsay).